The following is a 183-amino-acid chain: Apo-citrate lyase phosphoribosyl-dephospho-CoA transferase (183 aa).

This sequence belongs to the CitX family.

The enzyme catalyses apo-[citrate lyase ACP] + 2'-(5''-triphospho-alpha-D-ribosyl)-3'-dephospho-CoA = holo-[citrate lyase ACP] + diphosphate. In terms of biological role, transfers 2-(5''-triphosphoribosyl)-3'-dephosphocoenzyme-A on a serine residue to the apo-acyl carrier protein (gamma chain) of the citrate lyase to yield holo-acyl carrier protein. The protein is Apo-citrate lyase phosphoribosyl-dephospho-CoA transferase of Citrobacter koseri (strain ATCC BAA-895 / CDC 4225-83 / SGSC4696).